Here is a 214-residue protein sequence, read N- to C-terminus: Ribosomal RNA small subunit methyltransferase G (214 aa).

Residues glycine 81, methionine 86, 132 to 133 (VE), and arginine 147 contribute to the S-adenosyl-L-methionine site.

It belongs to the methyltransferase superfamily. RNA methyltransferase RsmG family.

The protein localises to the cytoplasm. It carries out the reaction guanosine(527) in 16S rRNA + S-adenosyl-L-methionine = N(7)-methylguanosine(527) in 16S rRNA + S-adenosyl-L-homocysteine. Specifically methylates the N7 position of guanine in position 527 of 16S rRNA. The sequence is that of Ribosomal RNA small subunit methyltransferase G from Pseudomonas aeruginosa (strain UCBPP-PA14).